A 287-amino-acid chain; its full sequence is Cbb3-type cytochrome c oxidase subunit FixP (287 aa).

Residues 1–33 (MSQKHIDELSGVETTGHEWDGIQELNNPMPRWW) lie on the Cytoplasmic side of the membrane. The chain crosses the membrane as a helical span at residues 34–54 (IWTFYVTILWAIGYAIAYPAI). Over 55–287 (PMITSATNGY…IFVHALGGGT (233 aa)) the chain is Periplasmic. Cytochrome c domains are found at residues 108–196 (FAIA…WGLT) and 203–284 (GLAA…HALG). Positions 121, 124, 125, 173, 216, 219, 220, and 261 each coordinate heme c.

This sequence belongs to the CcoP / FixP family. As to quaternary structure, component of the cbb3-type cytochrome c oxidase at least composed of FixN, FixO, FixQ and FixP. The cofactor is heme c.

Its subcellular location is the cell inner membrane. It functions in the pathway energy metabolism; oxidative phosphorylation. C-type cytochrome. Part of the cbb3-type cytochrome c oxidase complex. FixP subunit is required for transferring electrons from donor cytochrome c via its heme groups to FixO subunit. From there, electrons are shuttled to the catalytic binuclear center of FixN subunit where oxygen reduction takes place. The complex also functions as a proton pump. This Rhizobium etli (strain ATCC 51251 / DSM 11541 / JCM 21823 / NBRC 15573 / CFN 42) protein is Cbb3-type cytochrome c oxidase subunit FixP.